The sequence spans 277 residues: Phosphate import ATP-binding protein PstB 2 (277 aa).

The ABC transporter domain occupies I31 to I272. G63–S70 serves as a coordination point for ATP.

Belongs to the ABC transporter superfamily. Phosphate importer (TC 3.A.1.7) family. As to quaternary structure, the complex is composed of two ATP-binding proteins (PstB), two transmembrane proteins (PstC and PstA) and a solute-binding protein (PstS).

Its subcellular location is the cell inner membrane. It catalyses the reaction phosphate(out) + ATP + H2O = ADP + 2 phosphate(in) + H(+). Part of the ABC transporter complex PstSACB involved in phosphate import. Responsible for energy coupling to the transport system. The sequence is that of Phosphate import ATP-binding protein PstB 2 from Pseudomonas syringae pv. syringae (strain B728a).